We begin with the raw amino-acid sequence, 29 residues long: NADP phosphatase 1 (29 aa).

In terms of assembly, homodimer.

The protein localises to the cytoplasm. The sequence is that of NADP phosphatase 1 from Arthrobacter sp. (strain KM).